The following is a 336-amino-acid chain: Fructose-1,6-bisphosphatase class 1 (336 aa).

Glu90, Asp112, Leu114, and Asp115 together coordinate Mg(2+). Residues 115-118 (DGSS), Asn211, and Lys277 each bind substrate. Glu283 provides a ligand contact to Mg(2+).

The protein belongs to the FBPase class 1 family. Homotetramer. The cofactor is Mg(2+).

It localises to the cytoplasm. It catalyses the reaction beta-D-fructose 1,6-bisphosphate + H2O = beta-D-fructose 6-phosphate + phosphate. Its pathway is carbohydrate biosynthesis; gluconeogenesis. The sequence is that of Fructose-1,6-bisphosphatase class 1 from Pseudomonas putida (strain GB-1).